Here is a 229-residue protein sequence, read N- to C-terminus: Urease accessory protein UreF (229 aa).

Belongs to the UreF family. As to quaternary structure, ureD, UreF and UreG form a complex that acts as a GTP-hydrolysis-dependent molecular chaperone, activating the urease apoprotein by helping to assemble the nickel containing metallocenter of UreC. The UreE protein probably delivers the nickel.

It localises to the cytoplasm. Functionally, required for maturation of urease via the functional incorporation of the urease nickel metallocenter. This is Urease accessory protein UreF from Staphylococcus saprophyticus subsp. saprophyticus (strain ATCC 15305 / DSM 20229 / NCIMB 8711 / NCTC 7292 / S-41).